The sequence spans 314 residues: ADP-L-glycero-D-manno-heptose-6-epimerase (314 aa).

NADP(+)-binding positions include 10–11, 31–32, lysine 38, arginine 53, 75–79, and asparagine 92; these read MI, DH, and EGACS. Residue tyrosine 139 is the Proton acceptor of the active site. Lysine 143 contacts NADP(+). Residue asparagine 174 participates in substrate binding. NADP(+) contacts are provided by valine 175 and lysine 183. Lysine 183 serves as the catalytic Proton acceptor. Substrate-binding positions include serine 185, histidine 192, 206-209, arginine 214, and tyrosine 277; that span reads FAGS.

Belongs to the NAD(P)-dependent epimerase/dehydratase family. HldD subfamily. In terms of assembly, homopentamer. It depends on NADP(+) as a cofactor.

The catalysed reaction is ADP-D-glycero-beta-D-manno-heptose = ADP-L-glycero-beta-D-manno-heptose. It functions in the pathway nucleotide-sugar biosynthesis; ADP-L-glycero-beta-D-manno-heptose biosynthesis; ADP-L-glycero-beta-D-manno-heptose from D-glycero-beta-D-manno-heptose 7-phosphate: step 4/4. Its function is as follows. Catalyzes the interconversion between ADP-D-glycero-beta-D-manno-heptose and ADP-L-glycero-beta-D-manno-heptose via an epimerization at carbon 6 of the heptose. This chain is ADP-L-glycero-D-manno-heptose-6-epimerase, found in Vibrio cholerae serotype O1 (strain ATCC 39541 / Classical Ogawa 395 / O395).